Reading from the N-terminus, the 163-residue chain is MLKYIPAIFAIILSSNIAIASKNYDYINATPLRQVADLIDSHITNIDHLFNNRLMFYESSSIKSKFITKDKQYVIIMEVPGFDKNQIKVKLNGKKLFIAGNIEEKNKANDSDNYMNKNFNYVISLYEDVDQTNISARLKNGILTIILPRIEVKEQDAKEITIN.

Residues 55 to 163 enclose the sHSP domain; it reads MFYESSSIKS…EQDAKEITIN (109 aa).

Belongs to the small heat shock protein (HSP20) family.

In Rickettsia typhi (strain ATCC VR-144 / Wilmington), this protein is Small heat shock protein C1 (hspC1).